We begin with the raw amino-acid sequence, 773 residues long: MKAAVLDLGSLLAKLFETSTAPPAGPSSRPSGGAAAAGSGGSRAGTPLGTAPTLLRALAPDSPSASRRSPAPLLSSPYSRGSAASRAAGAVGTLLSWPSSPRAGKAPPQPPTPSGGGCSPARLVVPARPPSGPGGVWAALPRNPLQPGPGERELGACVAPGAGPRTLFLTLPDIGEEGASDGDSGDGEARGLSEGRRRHGFTVRSKDSLPTHFTRNVQKAIDKYTCKSLSSFSSSGSHTPTGAHTSWSGSATQSSTTGSSTERGSVYSWRDDEFDEASSQSVQRLLWEVEEMLFEGKVNPQTQSLLAECGEWTRRSLHLRVLGRQLILPTDKGVQHFQGSTPASAVHRPPLSACGHSSNIRELCISGSQIVPAALSASALPGPDDTGVADLTARSSLEEEVYHVDGKIEEYFAFDRKEDDDECLEQKPAQPGRKWRKLGLPPVSPRDCVKDAVAAEVFDHVWTNMVELLEELIRKHWETTLTEGKKQRETLKVAGNRFPHVLVPHAHADGASGPPSGHAEAHGISLASRLNPPQIHHFSSSFYSDMNGVMTIQAKPLQRRPAYFADRTQNEKEDKASGGGAGALSSAPHRLGRASDTHGLSPSAKKTPVPWRLPSLASDSQRLKTPNIYSDEVLRGTKLPTGVDHMASPLVQTSRSRFPPLVTETRGQNTAVPGCRLVSYRGRHLQNRVLSAMPDGTERSRLRERTATLERLSRPSTTHTFRQSDTPRKSSLTQMEFAAHTWTGQSILTGSQYVPKSFQRTTLTFKRRFQVTS.

Composition is skewed to low complexity over residues 18 to 37 and 54 to 90; these read TSTA…AAAA and LLRA…AAGA. Disordered stretches follow at residues 18 to 155, 173 to 210, 232 to 264, and 568 to 613; these read TSTA…RELG, DIGE…DSLP, FSSS…TERG, and TQNE…PWRL. Residues 174-186 show a composition bias toward acidic residues; sequence IGEEGASDGDSGD. Residues 245-264 show a composition bias toward low complexity; sequence TSWSGSATQSSTTGSSTERG.

The protein belongs to the FAM149 family.

This chain is Protein FAM149A (FAM149A), found in Homo sapiens (Human).